A 228-amino-acid polypeptide reads, in one-letter code: Probable endo-1,4-beta-xylanase A (228 aa).

The first 18 residues, 1–18 (MVSFSYLLLACSAIGALA), serve as a signal peptide directing secretion. Residue Asn-29 is glycosylated (N-linked (GlcNAc...) asparagine). One can recognise a GH11 domain in the interval 40-228 (AGTPSSTGWN…SSGSASITVY (189 aa)). Residue Glu-124 is the Nucleophile of the active site. Glu-215 acts as the Proton donor in catalysis.

It belongs to the glycosyl hydrolase 11 (cellulase G) family.

It is found in the secreted. It carries out the reaction Endohydrolysis of (1-&gt;4)-beta-D-xylosidic linkages in xylans.. Its pathway is glycan degradation; xylan degradation. In terms of biological role, endo-1,4-beta-xylanase involved in the hydrolysis of xylan, a major structural heterogeneous polysaccharide found in plant biomass representing the second most abundant polysaccharide in the biosphere, after cellulose. This chain is Probable endo-1,4-beta-xylanase A (xlnA), found in Aspergillus fumigatus (strain CBS 144.89 / FGSC A1163 / CEA10) (Neosartorya fumigata).